Consider the following 262-residue polypeptide: Phosphate import ATP-binding protein PstB (262 aa).

One can recognise an ABC transporter domain in the interval Ile16 to Ile257. Gly48–Ser55 serves as a coordination point for ATP.

Belongs to the ABC transporter superfamily. Phosphate importer (TC 3.A.1.7) family. The complex is composed of two ATP-binding proteins (PstB), two transmembrane proteins (PstC and PstA) and a solute-binding protein (PstS).

It localises to the cell inner membrane. It catalyses the reaction phosphate(out) + ATP + H2O = ADP + 2 phosphate(in) + H(+). Functionally, part of the ABC transporter complex PstSACB involved in phosphate import. Responsible for energy coupling to the transport system. The protein is Phosphate import ATP-binding protein PstB of Cupriavidus pinatubonensis (strain JMP 134 / LMG 1197) (Cupriavidus necator (strain JMP 134)).